Reading from the N-terminus, the 92-residue chain is Acylphosphatase (92 aa).

The 88-residue stretch at 3–90 (RVHVLVAGRV…GEFTEFAVLR (88 aa)) folds into the Acylphosphatase-like domain. Active-site residues include arginine 18 and asparagine 36.

This sequence belongs to the acylphosphatase family.

The catalysed reaction is an acyl phosphate + H2O = a carboxylate + phosphate + H(+). This is Acylphosphatase (acyP) from Methylococcus capsulatus (strain ATCC 33009 / NCIMB 11132 / Bath).